We begin with the raw amino-acid sequence, 689 residues long: DNA ligase (689 aa).

NAD(+) contacts are provided by residues Asp-40–Asp-44, Ser-89–Leu-90, and Glu-121. The active-site N6-AMP-lysine intermediate is the Lys-123. NAD(+)-binding residues include Arg-144, Glu-179, Lys-295, and Lys-319. The Zn(2+) site is built by Cys-413, Cys-416, Cys-431, and Cys-437. The 80-residue stretch at Lys-610 to Val-689 folds into the BRCT domain.

It belongs to the NAD-dependent DNA ligase family. LigA subfamily. Mg(2+) serves as cofactor. Requires Mn(2+) as cofactor.

The enzyme catalyses NAD(+) + (deoxyribonucleotide)n-3'-hydroxyl + 5'-phospho-(deoxyribonucleotide)m = (deoxyribonucleotide)n+m + AMP + beta-nicotinamide D-nucleotide.. Its function is as follows. DNA ligase that catalyzes the formation of phosphodiester linkages between 5'-phosphoryl and 3'-hydroxyl groups in double-stranded DNA using NAD as a coenzyme and as the energy source for the reaction. It is essential for DNA replication and repair of damaged DNA. This chain is DNA ligase, found in Rickettsia canadensis (strain McKiel).